Consider the following 208-residue polypeptide: 3-demethoxyubiquinol 3-hydroxylase (208 aa).

Glu57, Glu87, His90, Glu139, Glu171, and His174 together coordinate Fe cation.

It belongs to the COQ7 family. Fe cation is required as a cofactor.

The protein resides in the cell membrane. The enzyme catalyses a 5-methoxy-2-methyl-3-(all-trans-polyprenyl)benzene-1,4-diol + AH2 + O2 = a 3-demethylubiquinol + A + H2O. The protein operates within cofactor biosynthesis; ubiquinone biosynthesis. Its function is as follows. Catalyzes the hydroxylation of 2-nonaprenyl-3-methyl-6-methoxy-1,4-benzoquinol during ubiquinone biosynthesis. The polypeptide is 3-demethoxyubiquinol 3-hydroxylase (Janthinobacterium sp. (strain Marseille) (Minibacterium massiliensis)).